We begin with the raw amino-acid sequence, 759 residues long: Probable Na(+)/H(+) antiporter C3A11.09 (759 aa).

11 helical membrane-spanning segments follow: residues 12 to 32, 36 to 56, 105 to 125, 133 to 153, 172 to 192, 206 to 226, 244 to 264, 295 to 315, 319 to 339, 361 to 381, and 415 to 435; these read HLAYAIIGGFTSLFMLCSLII, LFLGEATMATATGLIFGPYVA, MLLPVMIFGWLVSTGFMYALI, SLAIAACITATDPVLASSIVG, ESGCNDGMAIPFLYLAIYLII, IIILYECTFGCVLGAIIGVIA, FLVFYFVLALFCGGIGTIIGV, VIDLLLNLSFFVYVGAIMPWP, MPHMDLSVWRLVVLAICILIA, ALFAGHFGPIGVGALYTCLVA, and VVCFLVLSSIIVHGSSIAFFM. The residue at position 442 (Thr-442) is a Phosphothreonine. Ser-446 bears the Phosphoserine mark. The residue at position 448 (Thr-448) is a Phosphothreonine. Composition is skewed to basic and acidic residues over residues 514–529, 537–547, 590–601, 622–647, and 655–671; these read LREERAESPRGGHYDA, YESRQPRRSNE, IDEKLAQGDPKA, NLHEPDDERQREPTLGHIESSIENHR, and SESHLRENSVERRRREQ. Disordered regions lie at residues 514 to 558, 578 to 606, and 622 to 759; these read LREE…NPGD, SHTSSRDANGPSIDEKLAQGDPKAKSFGR, and NLHE…RAWE. A compositionally biased stretch (polar residues) spans 696–713; the sequence is NENNESSSDTRNGLLSDN. Residues Asn-699 and Asn-713 are each glycosylated (N-linked (GlcNAc...) asparagine). Over residues 724–733 the composition is skewed to low complexity; the sequence is RAPSAAVSSE. Ser-735 is subject to Phosphoserine.

It belongs to the fungal Na(+)/H(+) exchanger family.

It is found in the membrane. Functionally, sodium export from cell, takes up external protons in exchange for internal sodium ions. The protein is Probable Na(+)/H(+) antiporter C3A11.09 (sod22) of Schizosaccharomyces pombe (strain 972 / ATCC 24843) (Fission yeast).